We begin with the raw amino-acid sequence, 123 residues long: Small ribosomal subunit protein uS12 (123 aa).

The tract at residues 1–21 (MPTIEQLVRKGRQAKPKKSKT) is disordered. The span at 9 to 20 (RKGRQAKPKKSK) shows a compositional bias: basic residues.

Belongs to the universal ribosomal protein uS12 family. As to quaternary structure, part of the 30S ribosomal subunit. Contacts proteins S8 and S17. May interact with IF1 in the 30S initiation complex.

Its function is as follows. With S4 and S5 plays an important role in translational accuracy. In terms of biological role, interacts with and stabilizes bases of the 16S rRNA that are involved in tRNA selection in the A site and with the mRNA backbone. Located at the interface of the 30S and 50S subunits, it traverses the body of the 30S subunit contacting proteins on the other side and probably holding the rRNA structure together. The combined cluster of proteins S8, S12 and S17 appears to hold together the shoulder and platform of the 30S subunit. This is Small ribosomal subunit protein uS12 from Bifidobacterium longum (strain NCC 2705).